The following is a 176-amino-acid chain: Ribosome maturation factor RimM (176 aa).

Residues 100–173 enclose the PRC barrel domain; the sequence is PEEYYDYQLI…RLRIDPPPGL (74 aa).

The protein belongs to the RimM family. Binds ribosomal protein uS19.

The protein localises to the cytoplasm. Its function is as follows. An accessory protein needed during the final step in the assembly of 30S ribosomal subunit, possibly for assembly of the head region. Essential for efficient processing of 16S rRNA. May be needed both before and after RbfA during the maturation of 16S rRNA. It has affinity for free ribosomal 30S subunits but not for 70S ribosomes. The sequence is that of Ribosome maturation factor RimM from Acidothermus cellulolyticus (strain ATCC 43068 / DSM 8971 / 11B).